Here is a 336-residue protein sequence, read N- to C-terminus: Putative ataxin-3 homolog (336 aa).

Residues 10–193 (GGLLYHEVQE…KECPMATEGS (184 aa)) enclose the Josephin domain. The active-site Nucleophile is the cysteine 23. Histidine 132 (proton acceptor) is an active-site residue. Asparagine 147 is a catalytic residue. The region spanning 244–263 (QEEADLNAAIAASLMDTGGP) is the UIM domain. Residues 281-336 (IESTSGEMSKDGNLEEQGANKSETSEPNSDNIESASGSNPKQNTTSLEGKESIKED) form a disordered region. Residues 299–327 (ANKSETSEPNSDNIESASGSNPKQNTTSL) are compositionally biased toward polar residues.

Its subcellular location is the nucleus. The enzyme catalyses Thiol-dependent hydrolysis of ester, thioester, amide, peptide and isopeptide bonds formed by the C-terminal Gly of ubiquitin (a 76-residue protein attached to proteins as an intracellular targeting signal).. Interacts with key regulators of transcription and represses transcription. Acts as a histone-binding protein that regulates transcription. Acts as a deubiquitinating enzyme. This chain is Putative ataxin-3 homolog, found in Oryza sativa subsp. japonica (Rice).